The sequence spans 47 residues: Large ribosomal subunit protein bL34 (47 aa).

A disordered region spans residues 1–47; it reads MVTEGLKPHISIKKKKRKSGFLARMRTKSGRKIIARRRRKGRKRLAP. Residues 10-47 are compositionally biased toward basic residues; the sequence is ISIKKKKRKSGFLARMRTKSGRKIIARRRRKGRKRLAP.

This sequence belongs to the bacterial ribosomal protein bL34 family.

This Aquifex aeolicus (strain VF5) protein is Large ribosomal subunit protein bL34 (rpmH).